A 492-amino-acid polypeptide reads, in one-letter code: Glycylpeptide N-tetradecanoyltransferase (492 aa).

Residues Met-1–Gly-22 are compositionally biased toward basic and acidic residues. The tract at residues Met-1–Thr-45 is disordered. Tetradecanoyl-CoA-binding positions include Tyr-82–Trp-85, Leu-215–Ile-217, and Ser-223–Thr-227. The active-site Proton acceptor; via carboxylate is Leu-492.

This sequence belongs to the NMT family. Monomer.

It is found in the cytoplasm. It carries out the reaction N-terminal glycyl-[protein] + tetradecanoyl-CoA = N-tetradecanoylglycyl-[protein] + CoA + H(+). Its function is as follows. Adds a myristoyl group to the N-terminal glycine residue of certain cellular proteins. This chain is Glycylpeptide N-tetradecanoyltransferase (nmt1), found in Aspergillus fumigatus (strain ATCC MYA-4609 / CBS 101355 / FGSC A1100 / Af293) (Neosartorya fumigata).